Consider the following 856-residue polypeptide: Envelope glycoprotein gp160 (856 aa).

Residues 1–31 (MKVKGIQGNWQNWWKWGTLILGLVIICSAAE) form the signal peptide. Residues 32 to 684 (NLWVTVYYGV…ISNWLWYIKI (653 aa)) are Extracellular-facing. C53 and C73 are disulfide-bonded. Residues N87, N132, N138, N152, N156, N183, and N198 are each glycosylated (N-linked (GlcNAc...) asparagine; by host). 5 cysteine pairs are disulfide-bonded: C118/C206, C125/C197, C130/C153, C219/C248, and C229/C240. The V1 stretch occupies residues 130–152 (CHNITIKDNNTNVDTEMKEEIKN). Residues 153–197 (CSYNMTTELRDKQRKIYSLFYRLDIVPIGGNSSNGDSSKYRLINC) form a V2 region. N-linked (GlcNAc...) asparagine; by host glycans are attached at residues N242, N263, N277, N294, N302, N332, N339, N355, and N364. The interval 297–330 (CMRPNNNTRKSISIGPGRAFFATGDIIGDIRQAH) is V3. Cysteines 297 and 331 form a disulfide. Residues 365–375 (SSGGDVEITTH) are CD4-binding loop. 2 disulfide bridges follow: C379–C445 and C386–C418. The segment at 386–418 (CNTSGLFNGTWLNGTSNNTWKIDTVNDTIILPC) is V4. N387, N393, N398, N402, N411, N448, N461, N462, and N465 each carry an N-linked (GlcNAc...) asparagine; by host glycan. V5 stretches follow at residues 461–471 (NNTSNETFRPG) and 463–471 (TSNETFRPG). A fusion peptide region spans residues 512 to 532 (AIGMGAFFLGFLGAAGSTMGA). The tract at residues 574-592 (KQLQARILAVERYLKDQQL) is immunosuppression. An intrachain disulfide couples C598 to C604. 3 N-linked (GlcNAc...) asparagine; by host glycosylation sites follow: N611, N616, and N637. Residues 633–667 (KEVSNYTQVIYNLIEESQTQQEINERDLLALDKWA) are a coiled coil. The MPER; binding to GalCer stretch occupies residues 662–683 (ALDKWANLWNWFDISNWLWYIK). Residues 685 to 705 (FIMIVGGLIGLRIVFAVLSII) traverse the membrane as a helical segment. Residues 706-856 (NRVRQGYSPL…IRQGLERALL (151 aa)) are Cytoplasmic-facing. The YXXL motif; contains endocytosis signal motif lies at 712–715 (YSPL). The segment at 720 to 742 (LTHHQREPDRPERIEEGGGEQDR) is disordered. The span at 723–742 (HQREPDRPERIEEGGGEQDR) shows a compositional bias: basic and acidic residues. C764 is lipidated: S-palmitoyl cysteine; by host. Residues 855-856 (LL) carry the Di-leucine internalization motif motif.

It belongs to the HIV-1 env protein family. The mature envelope protein (Env) consists of a homotrimer of non-covalently associated gp120-gp41 heterodimers. The resulting complex protrudes from the virus surface as a spike. There seems to be as few as 10 spikes on the average virion. Interacts with host CD4, CCR5 and CXCR4. Gp120 also interacts with the C-type lectins CD209/DC-SIGN and CLEC4M/DC-SIGNR (collectively referred to as DC-SIGN(R)). Gp120 and gp41 interact with GalCer. Gp120 interacts with host ITGA4/ITGB7 complex; on CD4+ T-cells, this interaction results in rapid activation of integrin ITGAL/LFA-1, which facilitates efficient cell-to-cell spreading of HIV-1. Gp120 interacts with cell-associated heparan sulfate; this interaction increases virus infectivity on permissive cells and may be involved in infection of CD4- cells. In terms of assembly, the mature envelope protein (Env) consists of a homotrimer of non-covalently associated gp120-gp41 heterodimers. The resulting complex protrudes from the virus surface as a spike. There seems to be as few as 10 spikes on the average virion. In terms of processing, highly glycosylated by host. The high number of glycan on the protein is reffered to as 'glycan shield' because it contributes to hide protein sequence from adaptive immune system. Post-translationally, palmitoylation of the transmembrane protein and of Env polyprotein (prior to its proteolytic cleavage) is essential for their association with host cell membrane lipid rafts. Palmitoylation is therefore required for envelope trafficking to classical lipid rafts, but not for viral replication. Specific enzymatic cleavages in vivo yield mature proteins. Envelope glycoproteins are synthesized as an inactive precursor that is heavily N-glycosylated and processed likely by host cell furin in the Golgi to yield the mature SU and TM proteins. The cleavage site between SU and TM requires the minimal sequence [KR]-X-[KR]-R. About 2 of the 9 disulfide bonds of gp41 are reduced by P4HB/PDI, following binding to CD4 receptor.

The protein localises to the virion membrane. It localises to the host cell membrane. It is found in the host endosome membrane. In terms of biological role, oligomerizes in the host endoplasmic reticulum into predominantly trimers. In a second time, gp160 transits in the host Golgi, where glycosylation is completed. The precursor is then proteolytically cleaved in the trans-Golgi and thereby activated by cellular furin or furin-like proteases to produce gp120 and gp41. Attaches the virus to the host lymphoid cell by binding to the primary receptor CD4. This interaction induces a structural rearrangement creating a high affinity binding site for a chemokine coreceptor like CXCR4 and/or CCR5. Acts as a ligand for CD209/DC-SIGN and CLEC4M/DC-SIGNR, which are respectively found on dendritic cells (DCs), and on endothelial cells of liver sinusoids and lymph node sinuses. These interactions allow capture of viral particles at mucosal surfaces by these cells and subsequent transmission to permissive cells. HIV subverts the migration properties of dendritic cells to gain access to CD4+ T-cells in lymph nodes. Virus transmission to permissive T-cells occurs either in trans (without DCs infection, through viral capture and transmission), or in cis (following DCs productive infection, through the usual CD4-gp120 interaction), thereby inducing a robust infection. In trans infection, bound virions remain infectious over days and it is proposed that they are not degraded, but protected in non-lysosomal acidic organelles within the DCs close to the cell membrane thus contributing to the viral infectious potential during DCs' migration from the periphery to the lymphoid tissues. On arrival at lymphoid tissues, intact virions recycle back to DCs' cell surface allowing virus transmission to CD4+ T-cells. Functionally, acts as a class I viral fusion protein. Under the current model, the protein has at least 3 conformational states: pre-fusion native state, pre-hairpin intermediate state, and post-fusion hairpin state. During fusion of viral and target intracellular membranes, the coiled coil regions (heptad repeats) assume a trimer-of-hairpins structure, positioning the fusion peptide in close proximity to the C-terminal region of the ectodomain. The formation of this structure appears to drive apposition and subsequent fusion of viral and target cell membranes. Complete fusion occurs in host cell endosomes and is dynamin-dependent, however some lipid transfer might occur at the plasma membrane. The virus undergoes clathrin-dependent internalization long before endosomal fusion, thus minimizing the surface exposure of conserved viral epitopes during fusion and reducing the efficacy of inhibitors targeting these epitopes. Membranes fusion leads to delivery of the nucleocapsid into the cytoplasm. This Homo sapiens (Human) protein is Envelope glycoprotein gp160.